The chain runs to 391 residues: DNA repair protein NreA (391 aa).

The C4-type zinc finger occupies 6 to 20 (CAECKGKLLCGRSKC). The PIP motif motif lies at 382-389 (QTSLASFF).

The protein belongs to the Nre family. In terms of assembly, interacts with the DNA polymerase sliding clamp (PCNA) via the PIP (PCNA-interacting peptide) motif.

Its function is as follows. Involved in DNA damage repair. In Archaeoglobus fulgidus (strain ATCC 49558 / DSM 4304 / JCM 9628 / NBRC 100126 / VC-16), this protein is DNA repair protein NreA.